The chain runs to 392 residues: DNA polymerase IV (392 aa).

One can recognise a UmuC domain in the interval 6–186 (IVHLDADAFF…LPIGKLPGVG (181 aa)). Mg(2+)-binding residues include D10 and D103. E104 is a catalytic residue.

It belongs to the DNA polymerase type-Y family. Monomer. Requires Mg(2+) as cofactor.

Its subcellular location is the cytoplasm. The catalysed reaction is DNA(n) + a 2'-deoxyribonucleoside 5'-triphosphate = DNA(n+1) + diphosphate. Functionally, poorly processive, error-prone DNA polymerase involved in untargeted mutagenesis. Copies undamaged DNA at stalled replication forks, which arise in vivo from mismatched or misaligned primer ends. These misaligned primers can be extended by PolIV. Exhibits no 3'-5' exonuclease (proofreading) activity. May be involved in translesional synthesis, in conjunction with the beta clamp from PolIII. The sequence is that of DNA polymerase IV from Opitutus terrae (strain DSM 11246 / JCM 15787 / PB90-1).